Consider the following 324-residue polypeptide: Testisin (324 aa).

The first 21 residues, 1–21 (MGARGKTLVPLLVVVATAAMA), serve as a signal peptide directing secretion. Positions 22 to 54 (LQSTYLQVDPEKPELQEPDLLSGPCGHRTIPSR) are excised as a propeptide. Cystine bridges form between C46/C167 and C80/C96. In terms of domain architecture, Peptidase S1 spans 55–296 (IVGGDDAELG…HYNWIQSTMI (242 aa)). Catalysis depends on charge relay system residues H95 and D147. Residues N170, N177, and N210 are each glycosylated (N-linked (GlcNAc...) asparagine). 3 cysteine pairs are disulfide-bonded: C181–C254, C214–C233, and C244–C272. S248 functions as the Charge relay system in the catalytic mechanism. An N-linked (GlcNAc...) asparagine glycan is attached at N283. The GPI-anchor amidated asparagine moiety is linked to residue N298. A propeptide spans 299-324 (GLLRPDPVPLLLFLTLAWASSLLRPA) (removed in mature form).

The protein belongs to the peptidase S1 family. Testis.

The protein resides in the cell membrane. Functionally, could regulate proteolytic events associated with testicular germ cell maturation. This chain is Testisin (Prss21), found in Mus musculus (Mouse).